Reading from the N-terminus, the 146-residue chain is MIDVMQIQEILPHRYPFLLVDKITELKVKEVVLGYKNISISDHVFMGHFPGHPIYPGVLILEGMAQTGGVLAFESMEDKVDPKSKVVYFTGIDGAKFRNPVRPGDRLDYEMSVVKNRGNMWIFKGQAFVDGNLVAEAELKAMIVDK.

Residue His48 is part of the active site.

This sequence belongs to the thioester dehydratase family. FabZ subfamily.

It is found in the cytoplasm. It catalyses the reaction a (3R)-hydroxyacyl-[ACP] = a (2E)-enoyl-[ACP] + H2O. Functionally, involved in unsaturated fatty acids biosynthesis. Catalyzes the dehydration of short chain beta-hydroxyacyl-ACPs and long chain saturated and unsaturated beta-hydroxyacyl-ACPs. This Campylobacter jejuni subsp. jejuni serotype O:6 (strain 81116 / NCTC 11828) protein is 3-hydroxyacyl-[acyl-carrier-protein] dehydratase FabZ.